Here is a 184-residue protein sequence, read N- to C-terminus: Ribosome-recycling factor (184 aa).

The protein belongs to the RRF family.

It localises to the cytoplasm. In terms of biological role, responsible for the release of ribosomes from messenger RNA at the termination of protein biosynthesis. May increase the efficiency of translation by recycling ribosomes from one round of translation to another. This is Ribosome-recycling factor from Thermoanaerobacter pseudethanolicus (strain ATCC 33223 / 39E) (Clostridium thermohydrosulfuricum).